Reading from the N-terminus, the 162-residue chain is Ubiquitin-fold modifier-conjugating enzyme 1 (162 aa).

The Glycyl thioester intermediate role is filled by Cys-115.

It belongs to the ubiquitin-conjugating enzyme family. UFC1 subfamily. As to quaternary structure, interacts with uba-5. Expressed in the intestine.

In terms of biological role, E2-like enzyme which forms an intermediate with ufm-1. The intermediate is formed via a thioester linkage. The chain is Ubiquitin-fold modifier-conjugating enzyme 1 from Caenorhabditis elegans.